The chain runs to 179 residues: Tetratricopeptide repeat protein 36 (179 aa).

3 TPR repeats span residues 43-76, 78-110, and 115-148; these read SLQL…CPKN, SAYN…AGPK, and CQAY…GSSF.

This sequence belongs to the TTC36 family.

The polypeptide is Tetratricopeptide repeat protein 36 (Caenorhabditis elegans).